Here is an 80-residue protein sequence, read N- to C-terminus: Exodeoxyribonuclease 7 small subunit (80 aa).

This sequence belongs to the XseB family. As to quaternary structure, heterooligomer composed of large and small subunits.

The protein resides in the cytoplasm. It catalyses the reaction Exonucleolytic cleavage in either 5'- to 3'- or 3'- to 5'-direction to yield nucleoside 5'-phosphates.. Its function is as follows. Bidirectionally degrades single-stranded DNA into large acid-insoluble oligonucleotides, which are then degraded further into small acid-soluble oligonucleotides. The sequence is that of Exodeoxyribonuclease 7 small subunit from Maridesulfovibrio salexigens (strain ATCC 14822 / DSM 2638 / NCIMB 8403 / VKM B-1763) (Desulfovibrio salexigens).